The primary structure comprises 427 residues: Enolase (427 aa).

Position 163 (Q163) interacts with (2R)-2-phosphoglycerate. E205 serves as the catalytic Proton donor. Residues D242, E285, and D312 each coordinate Mg(2+). 4 residues coordinate (2R)-2-phosphoglycerate: K337, R366, S367, and K388. K337 (proton acceptor) is an active-site residue.

This sequence belongs to the enolase family. The cofactor is Mg(2+).

The protein resides in the cytoplasm. Its subcellular location is the secreted. It is found in the cell surface. The enzyme catalyses (2R)-2-phosphoglycerate = phosphoenolpyruvate + H2O. The protein operates within carbohydrate degradation; glycolysis; pyruvate from D-glyceraldehyde 3-phosphate: step 4/5. Its function is as follows. Catalyzes the reversible conversion of 2-phosphoglycerate (2-PG) into phosphoenolpyruvate (PEP). It is essential for the degradation of carbohydrates via glycolysis. This chain is Enolase, found in Azorhizobium caulinodans (strain ATCC 43989 / DSM 5975 / JCM 20966 / LMG 6465 / NBRC 14845 / NCIMB 13405 / ORS 571).